The primary structure comprises 61 residues: Small ribosomal subunit protein uS14 (61 aa).

The Zn(2+) site is built by Cys24, Cys27, Cys40, and Cys43.

It belongs to the universal ribosomal protein uS14 family. Zinc-binding uS14 subfamily. As to quaternary structure, part of the 30S ribosomal subunit. Contacts proteins S3 and S10. Zn(2+) serves as cofactor.

Binds 16S rRNA, required for the assembly of 30S particles and may also be responsible for determining the conformation of the 16S rRNA at the A site. This is Small ribosomal subunit protein uS14 from Leptospira borgpetersenii serovar Hardjo-bovis (strain JB197).